A 235-amino-acid chain; its full sequence is MQLLTLNPAAISRTPPQAIDPSSSSSLLLPFPQILSSQRALGLVARPCNPLRRGLSRFLSSRQLFRRSKVVKAVATPDPILEVPLTEENVESVLDEIRPYLMSDGGNVALHEIDGNIVRVKLQGACGSCPSSTMTMKMGIERRLMEKIPEIVAVEALPDEETGLELNEENIEKVLEEIRPYLIGTADGSLDLVEIEDPIVKIRITGPAAGVMTVRVAVTQKLREKIPSIAAVQLI.

A chloroplast-targeting transit peptide spans methionine 1 to proline 16.

It belongs to the NifU family. As to quaternary structure, homodimer; disulfide-linked. It depends on [2Fe-2S] cluster as a cofactor. In terms of tissue distribution, predominantly expressed in leaves and floral stalks. Ubiquitous (at protein level).

Its subcellular location is the plastid. It localises to the chloroplast stroma. In terms of biological role, molecular scaffold for [Fe-S] cluster assembly of chloroplastic iron-sulfur proteins. Required for biogenesis of ferredoxin, a major photosynthetic electron carrier containing [2Fe-2S] cluster. Required for the assembly of photosystem I complex. The protein is NifU-like protein 2, chloroplastic (NIFU2) of Arabidopsis thaliana (Mouse-ear cress).